The following is a 177-amino-acid chain: Ribosome rescue factor SmrB (177 aa).

The Smr domain occupies 98–173 (LDMHGMKQDE…GAGAILVLLS (76 aa)).

The protein belongs to the SmrB family. In terms of assembly, associates with collided ribosomes, but not with correctly translating polysomes.

Functionally, acts as a ribosome collision sensor. Detects stalled/collided disomes (pairs of ribosomes where the leading ribosome is stalled and a second ribosome has collided with it) and endonucleolytically cleaves mRNA at the 5' boundary of the stalled ribosome. Stalled/collided disomes form a new interface (primarily via the 30S subunits) that binds SmrB. Cleaved mRNA becomes available for tmRNA ligation, leading to ribosomal subunit dissociation and rescue of stalled ribosomes. The sequence is that of Ribosome rescue factor SmrB from Aliivibrio fischeri (strain ATCC 700601 / ES114) (Vibrio fischeri).